The sequence spans 424 residues: L-glutamine:scyllo-inosose aminotransferase (424 aa).

Residues 1-21 (MDSSLAISGGPRLSNREWPRW) form a disordered region. Residue K202 is modified to N6-(pyridoxal phosphate)lysine.

It belongs to the DegT/DnrJ/EryC1 family. L-glutamine:2-deoxy-scyllo-inosose/scyllo-inosose aminotransferase subfamily. In terms of assembly, homodimer. Pyridoxal 5'-phosphate serves as cofactor.

The enzyme catalyses scyllo-inosose + L-glutamine = 1-amino-1-deoxy-scyllo-inositol + 2-oxoglutaramate. It participates in antibiotic biosynthesis; streptomycin biosynthesis. Catalyzes the PLP-dependent transamination of scyllo-inosose to form scyllo-inosamine. The sequence is that of L-glutamine:scyllo-inosose aminotransferase (stsC) from Streptomyces griseus.